The sequence spans 626 residues: Pheromone B alpha 3 receptor (626 aa).

7 helical membrane-spanning segments follow: residues 8–28 (LFPTFAFLGFVLALVPLPWHL), 36–56 (CFFMVWTALGCLNQFVNSIVW), 70–90 (ISIRITMGLSVGLPASSLCII), 113–133 (IIIDALICVLFPLVYIAMQYI), 163–183 (IWPVLIGMVSATYSVLALIEF), 208–228 (LMALAMTEMCCTVPLGIFVIV), and 271–291 (ELTRWLAPVSAMLFFAYFGFA). 4 disordered regions span residues 363 to 409 (KQYT…SSPI), 481 to 509 (ATFTSANNDTDEPTSPALPDTPSSCSSSA), 524 to 549 (STTDVTRDTGSLPIRRSPAGPPRLPS), and 571 to 626 (QDVA…RASV). Residues 376–391 (SSSGFSSSESTRFGSS) are compositionally biased toward low complexity. Residues 574 to 606 (ATGTAAPTTTAPAPASTTIAPATTTATAPTTTA) are compositionally biased toward low complexity.

The protein belongs to the G-protein coupled receptor 4 family.

It localises to the membrane. In terms of biological role, receptor for the BAP3 pheromone, a prenylated mating factor. The chain is Pheromone B alpha 3 receptor (BAR3) from Schizophyllum commune (strain H4-8 / FGSC 9210) (Split gill fungus).